Consider the following 100-residue polypeptide: Small ribosomal subunit protein uS14c (100 aa).

The protein belongs to the universal ribosomal protein uS14 family. As to quaternary structure, part of the 30S ribosomal subunit.

The protein resides in the plastid. The protein localises to the chloroplast. Binds 16S rRNA, required for the assembly of 30S particles. The polypeptide is Small ribosomal subunit protein uS14c (Populus alba (White poplar)).